A 186-amino-acid chain; its full sequence is ATP synthase subunit delta (186 aa).

It belongs to the ATPase delta chain family. As to quaternary structure, F-type ATPases have 2 components, F(1) - the catalytic core - and F(0) - the membrane proton channel. F(1) has five subunits: alpha(3), beta(3), gamma(1), delta(1), epsilon(1). F(0) has three main subunits: a(1), b(2) and c(10-14). The alpha and beta chains form an alternating ring which encloses part of the gamma chain. F(1) is attached to F(0) by a central stalk formed by the gamma and epsilon chains, while a peripheral stalk is formed by the delta and b chains.

The protein localises to the cell inner membrane. F(1)F(0) ATP synthase produces ATP from ADP in the presence of a proton or sodium gradient. F-type ATPases consist of two structural domains, F(1) containing the extramembraneous catalytic core and F(0) containing the membrane proton channel, linked together by a central stalk and a peripheral stalk. During catalysis, ATP synthesis in the catalytic domain of F(1) is coupled via a rotary mechanism of the central stalk subunits to proton translocation. Its function is as follows. This protein is part of the stalk that links CF(0) to CF(1). It either transmits conformational changes from CF(0) to CF(1) or is implicated in proton conduction. The sequence is that of ATP synthase subunit delta from Leptospira borgpetersenii serovar Hardjo-bovis (strain JB197).